A 131-amino-acid chain; its full sequence is Small ribosomal subunit protein eS17A (131 aa).

The protein belongs to the eukaryotic ribosomal protein eS17 family. In terms of assembly, component of the small ribosomal subunit (SSU). Mature yeast ribosomes consist of a small (40S) and a large (60S) subunit. The 40S small subunit contains 1 molecule of ribosomal RNA (18S rRNA) and at least 33 different proteins. The large 60S subunit contains 3 rRNA molecules (25S, 5.8S and 5S rRNA) and at least 46 different proteins.

Its subcellular location is the cytoplasm. Its function is as follows. Component of the ribosome, a large ribonucleoprotein complex responsible for the synthesis of proteins in the cell. The small ribosomal subunit (SSU) binds messenger RNAs (mRNAs) and translates the encoded message by selecting cognate aminoacyl-transfer RNA (tRNA) molecules. The large subunit (LSU) contains the ribosomal catalytic site termed the peptidyl transferase center (PTC), which catalyzes the formation of peptide bonds, thereby polymerizing the amino acids delivered by tRNAs into a polypeptide chain. The nascent polypeptides leave the ribosome through a tunnel in the LSU and interact with protein factors that function in enzymatic processing, targeting, and the membrane insertion of nascent chains at the exit of the ribosomal tunnel. The chain is Small ribosomal subunit protein eS17A (rps1701) from Schizosaccharomyces pombe (strain 972 / ATCC 24843) (Fission yeast).